A 1438-amino-acid polypeptide reads, in one-letter code: DNA polymerase III PolC-type (1438 aa).

Residues 422–578 (YVVFDVETTG…YDTEATAYMF (157 aa)) enclose the Exonuclease domain.

This sequence belongs to the DNA polymerase type-C family. PolC subfamily.

It is found in the cytoplasm. The enzyme catalyses DNA(n) + a 2'-deoxyribonucleoside 5'-triphosphate = DNA(n+1) + diphosphate. Required for replicative DNA synthesis. This DNA polymerase also exhibits 3' to 5' exonuclease activity. The sequence is that of DNA polymerase III PolC-type from Staphylococcus saprophyticus subsp. saprophyticus (strain ATCC 15305 / DSM 20229 / NCIMB 8711 / NCTC 7292 / S-41).